Consider the following 201-residue polypeptide: uncharacterized protein (201 aa).

Disordered stretches follow at residues P46–E80 and S143–A201. Polar residues-rich tracts occupy residues G64–Y78 and S143–A167.

This is an uncharacterized protein from Legionella pneumophila.